A 579-amino-acid polypeptide reads, in one-letter code: Acetolactate synthase (579 aa).

Glutamate 61 is a binding site for thiamine diphosphate. FAD contacts are provided by residues arginine 163, 274 to 295, and 317 to 336; these read HGTA…VGVR and DIDP…IVGD. The tract at residues 408 to 487 is thiamine pyrophosphate binding; it reads QHQMWAGQFV…VKVIILNNGW (80 aa). Residues aspartate 458 and asparagine 485 each coordinate Mg(2+).

The protein belongs to the TPP enzyme family. Mg(2+) serves as cofactor. Thiamine diphosphate is required as a cofactor.

It carries out the reaction 2 pyruvate + H(+) = (2S)-2-acetolactate + CO2. Its pathway is amino-acid biosynthesis; L-isoleucine biosynthesis; L-isoleucine from 2-oxobutanoate: step 1/4. The protein operates within amino-acid biosynthesis; L-valine biosynthesis; L-valine from pyruvate: step 1/4. This Arthrospira platensis (Spirulina platensis) protein is Acetolactate synthase (ilvY).